Consider the following 77-residue polypeptide: DNA-directed RNA polymerase subunit epsilon (77 aa).

The protein belongs to the RNA polymerase subunit epsilon family. RNAP is composed of a core of 2 alpha, a beta and a beta' subunit. The core is associated with a delta subunit, and at least one of epsilon or omega. When a sigma factor is associated with the core the holoenzyme is formed, which can initiate transcription.

It carries out the reaction RNA(n) + a ribonucleoside 5'-triphosphate = RNA(n+1) + diphosphate. A non-essential component of RNA polymerase (RNAP). This is DNA-directed RNA polymerase subunit epsilon from Streptococcus pneumoniae serotype 19F (strain G54).